The primary structure comprises 410 residues: F-box/WD-40 repeat-containing protein 1 (410 aa).

The F-box domain occupies 32–79; that stretch reads SKECSLLPFELFEEILCRVPTKSLLRLKLTCKRWLALFNDKRFIYKHL. WD repeat units lie at residues 109-150 and 269-309; these read PNKF…VRWI and DVHN…NGVS.

This is F-box/WD-40 repeat-containing protein 1 (FBW1) from Arabidopsis thaliana (Mouse-ear cress).